A 323-amino-acid chain; its full sequence is CIMIP2 protein CG18335 (323 aa).

Belongs to the CIMIP2 family.

It localises to the cytoplasm. The protein resides in the cytoskeleton. Its subcellular location is the cilium axoneme. Its function is as follows. Probable microtubule inner protein (MIP) part of the dynein-decorated doublet microtubules (DMTs) in cilium axoneme. In Drosophila melanogaster (Fruit fly), this protein is CIMIP2 protein CG18335.